Consider the following 469-residue polypeptide: Glutamate--tRNA ligase (469 aa).

Residues 9 to 19 (PSPTGFLHVGG) carry the 'HIGH' region motif. Positions 98, 100, 125, and 127 each coordinate Zn(2+). A 'KMSKS' region motif is present at residues 236–240 (KLSKR). ATP is bound at residue K239.

It belongs to the class-I aminoacyl-tRNA synthetase family. Glutamate--tRNA ligase type 1 subfamily. As to quaternary structure, monomer. It depends on Zn(2+) as a cofactor.

Its subcellular location is the cytoplasm. It catalyses the reaction tRNA(Glu) + L-glutamate + ATP = L-glutamyl-tRNA(Glu) + AMP + diphosphate. In terms of biological role, catalyzes the attachment of glutamate to tRNA(Glu) in a two-step reaction: glutamate is first activated by ATP to form Glu-AMP and then transferred to the acceptor end of tRNA(Glu). The chain is Glutamate--tRNA ligase from Shewanella baltica (strain OS185).